A 136-amino-acid polypeptide reads, in one-letter code: Evasin P991 (136 aa).

The N-terminal stretch at M1 to A28 is a signal peptide. Residues N41, N61, N64, N78, N92, N100, and N122 are each glycosylated (N-linked (GlcNAc...) asparagine). Disulfide bonds link C55–C77, C73–C114, C90–C119, and C109–C128.

It localises to the secreted. Functionally, salivary chemokine-binding protein which has chemokine-neutralizing activity and binds to host chemokines CCL2, CCL3, CCL3L1, CCL4, CCL4L1, CCL5, CCL6, CCL7, CCL8, CCL9, CCL11, CCL12, CCL13, CCL14, CCL16, CCL17, CCL18, CCL19, CCL22, CCL23, CCL24 and CCL27. In Amblyomma cajennense (Cayenne tick), this protein is Evasin P991.